Reading from the N-terminus, the 170-residue chain is Adenine phosphoribosyltransferase (170 aa).

This sequence belongs to the purine/pyrimidine phosphoribosyltransferase family. As to quaternary structure, homodimer.

Its subcellular location is the cytoplasm. It carries out the reaction AMP + diphosphate = 5-phospho-alpha-D-ribose 1-diphosphate + adenine. Its pathway is purine metabolism; AMP biosynthesis via salvage pathway; AMP from adenine: step 1/1. Functionally, catalyzes a salvage reaction resulting in the formation of AMP, that is energically less costly than de novo synthesis. This Bacillus mycoides (strain KBAB4) (Bacillus weihenstephanensis) protein is Adenine phosphoribosyltransferase.